A 606-amino-acid chain; its full sequence is Mitogen-activated protein kinase kinase kinase 7 (606 aa).

Positions 1–300 (MSTASAASSS…FPGADEPLQY (300 aa)) are interaction with MAPK8IP1. Residues 36 to 291 (IEVEEVVGRG…KIMTHLMRYF (256 aa)) form the Protein kinase domain. ATP-binding positions include 42–50 (VGRGAFGVV) and K63. K72 participates in a covalent cross-link: Glycyl lysine isopeptide (Lys-Gly) (interchain with G-Cter in ubiquitin). Catalysis depends on D156, which acts as the Proton acceptor. K158 is covalently cross-linked (Glycyl lysine isopeptide (Lys-Gly) (interchain with G-Cter in ubiquitin)). T184 and T187 each carry phosphothreonine; by autocatalysis. Phosphoserine; by autocatalysis is present on S192. K209 is covalently cross-linked (Glycyl lysine isopeptide (Lys-Gly) (interchain with G-Cter in ubiquitin)). 2 disordered regions span residues 301–338 (PCQYSDEGQSNSATSTGSFMDIASTNTSNKSDTNMEQV) and 354–391 (KNQAKQQSESGRLSLGASRGSSVESLPPASEGKRMSAD). Residues 306 to 338 (DEGQSNSATSTGSFMDIASTNTSNKSDTNMEQV) are compositionally biased toward polar residues. Low complexity predominate over residues 361-375 (SESGRLSLGASRGSS). S367, S389, and S439 each carry phosphoserine. Residues 443–452 (LTVTGTEPGQ) are compositionally biased toward polar residues. The segment at 443–493 (LTVTGTEPGQVSSRSSSPSVRMITTSGPTSEKPTRSHPWTPDDSTDTNGSD) is disordered. Positions 453 to 463 (VSSRSSSPSVR) are enriched in low complexity. S455 is modified (phosphoserine). The span at 464-473 (MITTSGPTSE) shows a compositional bias: polar residues.

Belongs to the protein kinase superfamily. STE Ser/Thr protein kinase family. MAP kinase kinase kinase subfamily. As to quaternary structure, can form homodimer. Binds both upstream activators and downstream substrates in multimolecular complexes. Interacts with TAB1/MAP3K7IP1, TAB2/MAP3K7IP2 and TAB3/MAP3K7IP3. Identified in the TRIKA2 complex composed of MAP3K7/TAK1, TAB1/MAP3K7IP1 and TAB2/MAP3K7IP2. Interacts with PPM1L and PPM1B/PP2CB. Interaction with PP2A and PPP6C leads to its repressed activity. Interacts with TRAF6 and TAB1/MAP3K7IP1; during IL-1 signaling. Interacts with TAOK1 and TAOK2; interaction with TAOK2 interferes with MAP3K7 interaction with IKKA, thus preventing NF-kappa-B activation. Interacts with DYNC2I2 (via WD domains). Interacts with CYLD and RBCK1. Interacts with TGFBR1; induces MAP3K7/TAK1 activation by TRAF6. Interacts with MAPK8IP1 and SMAD6. Interacts with isoform 1 of VRK2. Interacts with DAB2; the interaction is induced by TGF-beta stimulation and may mediate TGF-beta stimulated JNK activation. Interacts with TRIM5. Part of a complex containing ITCH, NDFIP1 and MAP3K7. Interacts with IFIT5; the interaction synergizes the recruitment of IKK to MAP3K7 and enhances IKK phosphorylation. Interacts with PLEKHM1 (via N- and C-terminus). Found in a complex with SH3RF1, RAC2, MAP2K7/MKK7, MAPK8IP1/JIP1, MAPK8/JNK1 and MAPK9/JNK2. Interacts with SASH1. Interacts with RIPK1. Mg(2+) serves as cofactor. Post-translationally, association with TAB1/MAP3K7IP1 promotes autophosphorylation at Ser-192 and subsequent activation. Association with TAB2/MAP3K7IP2, itself associated with free unanchored Lys-63 polyubiquitin chain, promotes autophosphorylation and subsequent activation of MAP3K7. Dephosphorylation at Ser-192 by PPM1B/PP2CB and at Thr-187 by PP2A and PPP6C leads to inactivation. 'Lys-48'-linked polyubiquitination at Lys-72 is induced by TNFalpha, and leads to proteasomal degradation. Undergoes 'Lys-48'-linked polyubiquitination catalyzed by ITCH. 'Lys-63'-linked polyubiquitination at Lys-158 by TRIM8 does not lead to proteasomal degradation but contributes to autophosphorylation and activation. Deubiquitinated by CYLD, a protease that selectively cleaves 'Lys-63'-linked ubiquitin chains. Deubiquitinated by USP19; leading to negative regulation of TNF-alpha- and IL-1beta-triggered NF-kappa-B activation.

Its subcellular location is the cytoplasm. It is found in the cell membrane. It carries out the reaction L-seryl-[protein] + ATP = O-phospho-L-seryl-[protein] + ADP + H(+). The enzyme catalyses L-threonyl-[protein] + ATP = O-phospho-L-threonyl-[protein] + ADP + H(+). Its activity is regulated as follows. Activated by pro-inflammatory cytokines and in response to physical and chemical stresses, including osmotic stress, oxidative stress, arsenic and ultraviolet light irradiation. Activated by 'Lys-63'-linked polyubiquitination and by autophosphorylation. Association with TAB1/MAP3K7IP1 and TAB2/MAP3K7IP2 promotes activation through autophosphorylation, whereas PPM1B/PP2CB, PP2A and PPP6C dephosphorylation leads to inactivation. Ceramides are also able to activate MAP3K7/TAK1. Its function is as follows. Serine/threonine kinase which acts as an essential component of the MAP kinase signal transduction pathway. Plays an important role in the cascades of cellular responses evoked by changes in the environment. Mediates signal transduction of TRAF6, various cytokines including interleukin-1 (IL-1), transforming growth factor-beta (TGFB), TGFB-related factors like BMP2 and BMP4, toll-like receptors (TLR), tumor necrosis factor receptor CD40 and B-cell receptor (BCR). Once activated, acts as an upstream activator of the MKK/JNK signal transduction cascade and the p38 MAPK signal transduction cascade through the phosphorylation and activation of several MAP kinase kinases like MAP2K1/MEK1, MAP2K3/MKK3, MAP2K6/MKK6 and MAP2K7/MKK7. These MAP2Ks in turn activate p38 MAPKs and c-jun N-terminal kinases (JNKs); both p38 MAPK and JNK pathways control the transcription factors activator protein-1 (AP-1). Independently of MAP2Ks and p38 MAPKs, acts as a key activator of NF-kappa-B by promoting activation of the I-kappa-B-kinase (IKK) core complex. Mechanistically, recruited to polyubiquitin chains of RIPK2 and IKBKG/NEMO via TAB2/MAP3K7IP2 and TAB3/MAP3K7IP3, and catalyzes phosphorylation and activation of IKBKB/IKKB component of the IKK complex, leading to NF-kappa-B activation. In osmotic stress signaling, plays a major role in the activation of MAPK8/JNK1, but not that of NF-kappa-B. Promotes TRIM5 capsid-specific restriction activity. Phosphorylates RIPK1 at 'Ser-321' which positively regulates RIPK1 interaction with RIPK3 to promote necroptosis but negatively regulates RIPK1 kinase activity and its interaction with FADD to mediate apoptosis. Phosphorylates STING1 in response to cGAMP-activation, promoting association between STEEP1 and STING1 and STING1 translocation to COPII vesicles. The polypeptide is Mitogen-activated protein kinase kinase kinase 7 (MAP3K7) (Pongo abelii (Sumatran orangutan)).